The chain runs to 398 residues: DNA polymerase IV (398 aa).

In terms of domain architecture, UmuC spans 5–187; sequence IFLVDMNAFF…LSIKSMHGVG (183 aa). Residues Asp9 and Asp105 each contribute to the Mg(2+) site. Residue Glu106 is part of the active site.

It belongs to the DNA polymerase type-Y family. As to quaternary structure, monomer. The cofactor is Mg(2+).

It localises to the cytoplasm. It catalyses the reaction DNA(n) + a 2'-deoxyribonucleoside 5'-triphosphate = DNA(n+1) + diphosphate. Functionally, poorly processive, error-prone DNA polymerase involved in untargeted mutagenesis. Copies undamaged DNA at stalled replication forks, which arise in vivo from mismatched or misaligned primer ends. These misaligned primers can be extended by PolIV. Exhibits no 3'-5' exonuclease (proofreading) activity. May be involved in translesional synthesis, in conjunction with the beta clamp from PolIII. This chain is DNA polymerase IV, found in Alkaliphilus oremlandii (strain OhILAs) (Clostridium oremlandii (strain OhILAs)).